The sequence spans 334 residues: Uracil-DNA glycosylase (334 aa).

A compositionally biased stretch (basic residues) spans 1–17 (MKRACSRSPSPRRRPSS). Disordered regions lie at residues 1 to 63 (MKRA…CRSS) and 79 to 104 (VTFSSSAPPDPPMDLTNGGVSPAATS). Residues 40-50 (GASNDASTETR) are compositionally biased toward polar residues. Asp-178 functions as the Proton acceptor in the catalytic mechanism.

This sequence belongs to the uracil-DNA glycosylase (UDG) superfamily. UNG family.

It localises to the host nucleus. It catalyses the reaction Hydrolyzes single-stranded DNA or mismatched double-stranded DNA and polynucleotides, releasing free uracil.. In terms of biological role, excises uracil residues from the DNA which can arise as a result of misincorporation of dUMP residues by DNA polymerase or deamination of cytosines. Therefore may reduce deleterious uracil incorporation into the viral genome, particularly in terminally differentiated cells which lack DNA repair enzymes. The protein is Uracil-DNA glycosylase of Human herpesvirus 1 (strain 17) (HHV-1).